Here is a 197-residue protein sequence, read N- to C-terminus: MYB-like transcription factor EOBII (197 aa).

HTH myb-type domains lie at 10–62 (DAEV…LNYL) and 63–117 (RPDV…QKHI). DNA-binding regions (H-T-H motif) lie at residues 38–62 (WNSL…LNYL) and 90–113 (WSKI…RTRI). Residues 125–158 (GQAASSEQNDHQEACTSQMSNGPNDNTIDQTYSP) are disordered. Positions 138–158 (ACTSQMSNGPNDNTIDQTYSP) are enriched in polar residues.

Specifically expressed in flowers, mostly in stigmas, petal tubes and petal limbs, and, to a lower extent, in anthers and stamen. Also present at low levels in roots, stems, leaves and sepals.

Its subcellular location is the nucleus. In terms of biological role, MYB-type transcription factor controlling the production of volatile organic compounds (VOCs), including floral volatile benzenoids and phenylpropanoids (FVBP), in flowers of fragrant cultivars (e.g. cv. Mitchell and cv. V26) by regulating the expression of ODO1 and EOBI, key regulators of the shikimate pathway, and of several biosynthetic floral scent-related genes including IGS, PAL2 and CFAT. This scent, mostly produced in the evening and night by the petals, attracts the pollinators (e.g. the night-active hawkmoth pollinator Manduca sexta). Binds to and activates the ODO1 and EOBI promoters via MYB binding sites (MBS) 5'-AAACCTAAT-3' and 5'-CTAACT-3'. Regulates the promoters of IGS1, CFAT and PAL2. Controls flowers petal opening by modulating a global transcriptomic switch. This Petunia hybrida (Petunia) protein is MYB-like transcription factor EOBII.